The sequence spans 127 residues: E3 ubiquitin-protein ligase PPP1R11 (127 aa).

Disordered stretches follow at residues 1–55 and 70–127; these read MAEA…EHMG and AFGE…PMQH. N-acetylalanine is present on A2. Positions 11-23 are enriched in low complexity; that stretch reads ETVTETTVTVTTE. The span at 40 to 55 shows a compositional bias: basic and acidic residues; it reads KKVEWSSDTVDNEHMG. Positions 53-63 are atypical RING finger domain 1; sequence HMGRRSSKCCC. S74 and S75 each carry phosphoserine. A Phosphothreonine modification is found at T76. At S78 the chain carries Phosphoserine. The interval 86–95 is atypical RING finger domain 2; sequence CGHTHCVRGH. Residues 90-100 are compositionally biased toward basic residues; that stretch reads HCVRGHRKGRR. Residues 103 to 127 are compositionally biased toward pro residues; it reads TPGPTPTTPPQPPDPSQPPPGPMQH. At T110 the chain carries Phosphothreonine.

Interacts with TLR2 and UBE2D2. Post-translationally, auto-ubiquitinated.

The catalysed reaction is S-ubiquitinyl-[E2 ubiquitin-conjugating enzyme]-L-cysteine + [acceptor protein]-L-lysine = [E2 ubiquitin-conjugating enzyme]-L-cysteine + N(6)-ubiquitinyl-[acceptor protein]-L-lysine.. It participates in protein modification; protein ubiquitination. Atypical E3 ubiquitin-protein ligase which ubiquitinates TLR2 at 'Lys-754' leading to its degradation by the proteasome. Plays a role in regulating inflammatory cytokine release and gram-positive bacterial clearance by functioning, in part, through the ubiquitination and degradation of TLR2. Inhibitor of protein phosphatase 1. This Rattus norvegicus (Rat) protein is E3 ubiquitin-protein ligase PPP1R11 (Ppp1r11).